Consider the following 199-residue polypeptide: Probable nicotinate-nucleotide adenylyltransferase (199 aa).

It belongs to the NadD family.

The catalysed reaction is nicotinate beta-D-ribonucleotide + ATP + H(+) = deamido-NAD(+) + diphosphate. Its pathway is cofactor biosynthesis; NAD(+) biosynthesis; deamido-NAD(+) from nicotinate D-ribonucleotide: step 1/1. Functionally, catalyzes the reversible adenylation of nicotinate mononucleotide (NaMN) to nicotinic acid adenine dinucleotide (NaAD). The polypeptide is Probable nicotinate-nucleotide adenylyltransferase (Roseobacter denitrificans (strain ATCC 33942 / OCh 114) (Erythrobacter sp. (strain OCh 114))).